Consider the following 204-residue polypeptide: MNTQPLRVGIGGPVGSGKTALTLALCLALRDRYNLAVVTNDIYTREDADFLVRNQALAPERIIGVETGGCPHTAIREDASINLEAVDQLNRRFPGLDLILVESGGDNLSATFSPELSDLTIYVIDVSAGDKLPRKGGPGICKSDLLVINKIDLAPLVGASLELMNSDTQRMRNGKPFVFSNQKTGVGLEEIVAFIERQGLLTAA.

12–19 (GPVGSGKT) lines the GTP pocket.

Belongs to the SIMIBI class G3E GTPase family. UreG subfamily. In terms of assembly, homodimer. UreD, UreF and UreG form a complex that acts as a GTP-hydrolysis-dependent molecular chaperone, activating the urease apoprotein by helping to assemble the nickel containing metallocenter of UreC. The UreE protein probably delivers the nickel.

It is found in the cytoplasm. Its function is as follows. Facilitates the functional incorporation of the urease nickel metallocenter. This process requires GTP hydrolysis, probably effectuated by UreG. The protein is Urease accessory protein UreG of Pseudomonas fluorescens (strain SBW25).